A 305-amino-acid polypeptide reads, in one-letter code: Probable aspartoacylase (305 aa).

The Zn(2+) site is built by His13 and Glu16. Residues Arg55 and Asn62 to Arg63 contribute to the substrate site. His105 contacts Zn(2+). The substrate site is built by Glu163 and Tyr273.

The protein belongs to the AspA/AstE family. Aspartoacylase subfamily. Zn(2+) is required as a cofactor.

The catalysed reaction is an N-acyl-L-aspartate + H2O = a carboxylate + L-aspartate. The protein is Probable aspartoacylase of Prochlorococcus marinus (strain NATL2A).